The primary structure comprises 259 residues: ATP synthase subunit b 2 (259 aa).

Residues 5 to 27 form a helical membrane-spanning segment; sequence WFTVSAQAINFLILVALLKRFLY.

It belongs to the ATPase B chain family. As to quaternary structure, F-type ATPases have 2 components, F(1) - the catalytic core - and F(0) - the membrane proton channel. F(1) has five subunits: alpha(3), beta(3), gamma(1), delta(1), epsilon(1). F(0) has three main subunits: a(1), b(2) and c(10-14). The alpha and beta chains form an alternating ring which encloses part of the gamma chain. F(1) is attached to F(0) by a central stalk formed by the gamma and epsilon chains, while a peripheral stalk is formed by the delta and b chains.

Its subcellular location is the cell inner membrane. Its function is as follows. F(1)F(0) ATP synthase produces ATP from ADP in the presence of a proton or sodium gradient. F-type ATPases consist of two structural domains, F(1) containing the extramembraneous catalytic core and F(0) containing the membrane proton channel, linked together by a central stalk and a peripheral stalk. During catalysis, ATP synthesis in the catalytic domain of F(1) is coupled via a rotary mechanism of the central stalk subunits to proton translocation. In terms of biological role, component of the F(0) channel, it forms part of the peripheral stalk, linking F(1) to F(0). The protein is ATP synthase subunit b 2 of Syntrophotalea carbinolica (strain DSM 2380 / NBRC 103641 / GraBd1) (Pelobacter carbinolicus).